Here is a 301-residue protein sequence, read N- to C-terminus: Beta-1,3-galactosyltransferase 5 (301 aa).

Over 1–7 (MAFPKMR) the chain is Cytoplasmic. A helical; Signal-anchor for type II membrane protein transmembrane segment spans residues 8–28 (LMYVCLLVLGALCLYFSMYSL). Topologically, residues 29–301 (NLFKEQSFVY…LLDYWQALEN (273 aa)) are lumenal. N-linked (GlcNAc...) asparagine glycans are attached at residues asparagine 130, asparagine 174, and asparagine 231.

It belongs to the glycosyltransferase 31 family.

The protein localises to the golgi apparatus membrane. It catalyses the reaction a globoside Gb4Cer (d18:1(4E)) + UDP-alpha-D-galactose = a globoside GalGb4Cer (d18:1(4E)) + UDP + H(+). It functions in the pathway protein modification; protein glycosylation. In terms of biological role, catalyzes the transfer of Gal to GlcNAc-based acceptors with a preference for the core3 O-linked glycan GlcNAc(beta1,3)GalNAc structure. Can use glycolipid LC3Cer as an efficient acceptor. The protein is Beta-1,3-galactosyltransferase 5 (B3GALT5) of Pan paniscus (Pygmy chimpanzee).